The sequence spans 124 residues: Small ribosomal subunit protein bS6 (124 aa).

The tract at residues 100 to 124 (KERRAARQKTGETQENVSQEESSTN) is disordered. Positions 110–124 (GETQENVSQEESSTN) are enriched in polar residues.

The protein belongs to the bacterial ribosomal protein bS6 family.

Its function is as follows. Binds together with bS18 to 16S ribosomal RNA. This chain is Small ribosomal subunit protein bS6, found in Fervidobacterium nodosum (strain ATCC 35602 / DSM 5306 / Rt17-B1).